The chain runs to 246 residues: DNA repair protein RecO (246 aa).

The protein belongs to the RecO family.

Involved in DNA repair and RecF pathway recombination. This chain is DNA repair protein RecO, found in Nitrosococcus oceani (strain ATCC 19707 / BCRC 17464 / JCM 30415 / NCIMB 11848 / C-107).